The following is a 67-amino-acid chain: Toxin Cex8 (67 aa).

Residue Ala-1 is a signal peptide. The 64-residue stretch at 2–65 (KEGYLVNIYT…SYPYPEKSCG (64 aa)) folds into the LCN-type CS-alpha/beta domain. Intrachain disulfides connect Cys-13–Cys-64, Cys-17–Cys-40, Cys-26–Cys-45, and Cys-30–Cys-47. Position 64 is a cysteine amide (Cys-64). The propeptide occupies 65–67 (GRK).

It belongs to the long (4 C-C) scorpion toxin superfamily. Sodium channel inhibitor family. Beta subfamily. As to expression, expressed by the venom gland.

Its subcellular location is the secreted. Beta toxins bind voltage-independently at site-4 of sodium channels (Nav) and shift the voltage of activation toward more negative potentials thereby affecting sodium channel activation and promoting spontaneous and repetitive firing. This chain is Toxin Cex8, found in Centruroides exilicauda (Bark scorpion).